The chain runs to 171 residues: UPF0312 protein SAB2563 (171 aa).

It belongs to the UPF0312 family.

The sequence is that of UPF0312 protein SAB2563 from Staphylococcus aureus (strain bovine RF122 / ET3-1).